Consider the following 350-residue polypeptide: Peptide-N(4)-(N-acetyl-beta-glucosaminyl)asparagine amidase (350 aa).

Residues Cys123, Cys126, Cys157, and Cys160 each coordinate Zn(2+). Cys183 (nucleophile) is an active-site residue. Active-site residues include His210 and Asp227. Substrate is bound at residue Glu230. Residues 324 to 350 form a disordered region; that stretch reads EIPPAAGAAGRQSGSADWKRQRGEDGR. Positions 340–350 are enriched in basic and acidic residues; sequence DWKRQRGEDGR.

This sequence belongs to the transglutaminase-like superfamily. PNGase family. Requires Zn(2+) as cofactor.

It is found in the cytoplasm. The enzyme catalyses Hydrolysis of an N(4)-(acetyl-beta-D-glucosaminyl)asparagine residue in which the glucosamine residue may be further glycosylated, to yield a (substituted) N-acetyl-beta-D-glucosaminylamine and a peptide containing an aspartate residue.. Its function is as follows. Specifically deglycosylates the denatured form of N-linked glycoproteins in the cytoplasm and assists their proteasome-mediated degradation. Cleaves the beta-aspartyl-glucosamine (GlcNAc) of the glycan and the amide side chain of Asn, converting Asn to Asp. Prefers proteins containing high-mannose over those bearing complex type oligosaccharides. Can recognize misfolded proteins in the endoplasmic reticulum that are exported to the cytosol to be destroyed and deglycosylate them, while it has no activity toward native proteins. Deglycosylation is a prerequisite for subsequent proteasome-mediated degradation of some, but not all, misfolded glycoproteins. This is Peptide-N(4)-(N-acetyl-beta-glucosaminyl)asparagine amidase (PNG1) from Eremothecium gossypii (strain ATCC 10895 / CBS 109.51 / FGSC 9923 / NRRL Y-1056) (Yeast).